A 445-amino-acid polypeptide reads, in one-letter code: Ribosome biogenesis protein YTM1 (445 aa).

The ubiquitin-like (UBL) domain stretch occupies residues 8–89 (VKVKFFTREQ…EAVLNVEYTR (82 aa)). The segment at 99–445 (SFSNEDWVSA…FNKGDNIFKN (347 aa)) is sufficient for interaction with ERB1 and association with 66S pre-ribosomes. 7 WD repeats span residues 101–138 (SNEDWVSALDVGAERIVSGSYDGVVRTWNLSGKIEKQY), 140–178 (GHTGAVRAVKFISSTRLVSGGNDRTLRLWKTKNDDVKHV), 195–232 (GHQAPVVSVDVQGDRILSASYDNSIGFWSTNHKDMTAV), 270–310 (SHKA…CVDT), 312–351 (STSYSLLSMVELPKLRLLACGSSARHITLHDPRADSSAKI), 358–398 (GHKN…SIYT), and 409–445 (GINDKVFAVKWAKGVGIISGGQDKKIQFNKGDNIFKN).

This sequence belongs to the WD repeat WDR12/YTM1 family. Component of the NOP7 complex, composed of ERB1, NOP7 and YTM1. The complex is held together by ERB1, which interacts with NOP7 via its N-terminal domain and with YTM1 via a high-affinity interaction between the seven-bladed beta-propeller domains of the 2 proteins. The NOP7 complex associates with the 66S pre-ribosome. Interacts (via UBL domain) with MDN1 (via VWFA/MIDAS domain).

The protein resides in the nucleus. It is found in the nucleolus. Its subcellular location is the nucleoplasm. Its function is as follows. Component of the NOP7 complex, which is required for maturation of the 25S and 5.8S ribosomal RNAs and formation of the 60S ribosome. This chain is Ribosome biogenesis protein YTM1, found in Eremothecium gossypii (strain ATCC 10895 / CBS 109.51 / FGSC 9923 / NRRL Y-1056) (Yeast).